We begin with the raw amino-acid sequence, 221 residues long: uncharacterized protein (221 aa).

This is an uncharacterized protein from Shigella flexneri.